We begin with the raw amino-acid sequence, 200 residues long: NAD(P)H dehydrogenase (quinone) (200 aa).

The Flavodoxin-like domain maps to 4–191; sequence VLVLYYSSYG…DIARYQGKHV (188 aa). FMN-binding positions include 10–15 and 79–81; these read SSYGHV and TRF. Y12 serves as a coordination point for NAD(+). W99 serves as a coordination point for substrate. FMN-binding positions include 114 to 120 and H135; that span reads STGTQHG.

It belongs to the WrbA family. FMN serves as cofactor.

The catalysed reaction is a quinone + NADH + H(+) = a quinol + NAD(+). The enzyme catalyses a quinone + NADPH + H(+) = a quinol + NADP(+). This chain is NAD(P)H dehydrogenase (quinone), found in Burkholderia vietnamiensis (strain G4 / LMG 22486) (Burkholderia cepacia (strain R1808)).